The following is a 228-amino-acid chain: L-ribulose-5-phosphate 4-epimerase UlaF (228 aa).

Residues 26 to 27 (GN), 43 to 44 (SG), and 72 to 73 (SS) contribute to the substrate site. Zn(2+) contacts are provided by Asp-74, His-93, and His-95. Asp-118 acts as the Proton donor/acceptor in catalysis. Zn(2+) is bound at residue His-167. The Proton donor/acceptor role is filled by Tyr-225.

This sequence belongs to the aldolase class II family. AraD/FucA subfamily. It depends on Zn(2+) as a cofactor.

The enzyme catalyses L-ribulose 5-phosphate = D-xylulose 5-phosphate. It participates in cofactor degradation; L-ascorbate degradation; D-xylulose 5-phosphate from L-ascorbate: step 4/4. Its function is as follows. Catalyzes the isomerization of L-ribulose 5-phosphate to D-xylulose 5-phosphate. Is involved in the anaerobic L-ascorbate utilization. This is L-ribulose-5-phosphate 4-epimerase UlaF from Escherichia coli (strain ATCC 8739 / DSM 1576 / NBRC 3972 / NCIMB 8545 / WDCM 00012 / Crooks).